A 337-amino-acid chain; its full sequence is Cell-surface associated glycoprotein DFI1 (337 aa).

The Cytoplasmic segment spans residues 1–21; sequence MEKLSINNNNNNRRYQSRRFD. Residues 22–42 traverse the membrane as a helical segment; it reads GITIIRIVVLVFIVTVSTYFV. Topologically, residues 43-269 are extracellular; sequence NSYTCNQPHH…NGGGLSHTNR (227 aa). Asparagine 53, asparagine 65, asparagine 87, and asparagine 100 each carry an N-linked (GlcNAc...) asparagine glycan. Low complexity-rich tracts occupy residues 124–220 and 241–259; these read SSTF…TSAS and SVIS…KNND. Disordered stretches follow at residues 124–224 and 241–265; these read SSTF…QHVT and SVIS…GGLS. The helical transmembrane segment at 270–290 threads the bilayer; that stretch reads IVVGVVVGVGGSILIGLLAVL. A Glycophorin A motif is present at residues 273-277; it reads GVVVG. At 291–337 the chain is on the cytoplasmic side; sequence FYLRKRNNRDYEGGWTFWRKNEKLGSDEFFNGELGVRDRNINQGSNF. The Calmodulin-binding signature appears at 301–314; it reads YEGGWTFWRKNEKL.

Belongs to the MID2 like cell wall stress sensor family. Post-translationally, cross-linked to the carbohydrate polymers of the cell wall. In terms of processing, O-glycosylated by MNT1 and MNT2. Also N-glycosylated.

It is found in the cell membrane. The protein localises to the cell septum. It localises to the secreted. Its subcellular location is the cell wall. Functionally, cell-surface associated glycoprotein that acts as a plasma membrane receptor-type protein which senses the presence of matrix. Binds to calmodulin in response to environmental conditions and initiates a signaling cascade that activates CEK1, thus promoting invasive filamentation. Involved in the maintenance of the cell wall. This Candida albicans (strain SC5314 / ATCC MYA-2876) (Yeast) protein is Cell-surface associated glycoprotein DFI1.